Here is a 160-residue protein sequence, read N- to C-terminus: uncharacterized protein (160 aa).

The protein localises to the cytoplasm. It localises to the nucleus. This is an uncharacterized protein from Schizosaccharomyces pombe (strain 972 / ATCC 24843) (Fission yeast).